The following is a 382-amino-acid chain: Lysophosphatidylserine lipase ABHD12 (382 aa).

Over residues 1 to 12 the composition is skewed to basic and acidic residues; that stretch reads MRKRKGSADHDS. The disordered stretch occupies residues 1 to 45; it reads MRKRKGSADHDSSFTATLTDGSSDLKQCHKGTDADTDPGGSGKEM. Topologically, residues 1–60 are cytoplasmic; it reads MRKRKGSADHDSSFTATLTDGSSDLKQCHKGTDADTDPGGSGKEMGRRCRRGGLMWRLRR. The segment covering 13 to 25 has biased composition (polar residues); the sequence is SFTATLTDGSSDL. A helical transmembrane segment spans residues 61–81; it reads ILIWLLGIYIAIPVIIKVCPS. Residues 82–382 are Extracellular-facing; the sequence is IQAKLVFLNF…DFLRAPHPHG (301 aa). The N-linked (GlcNAc...) asparagine glycan is linked to asparagine 109. Residue serine 232 is the Nucleophile of the active site. Active-site charge relay system residues include aspartate 319 and histidine 358.

Belongs to the serine esterase family. Ubiquitously expressed in adult tissues.

The protein localises to the endoplasmic reticulum membrane. The catalysed reaction is 1-(9Z-octadecenoyl)-sn-glycero-3-phospho-L-serine + H2O = sn-glycero-3-phospho-L-serine + (9Z)-octadecenoate + H(+). It carries out the reaction 1-(9Z-octadecenoyl)-sn-glycero-3-phospho-(1'-sn-glycerol) + H2O = sn-glycero-3-phospho-(1'-sn-glycerol) + (9Z)-octadecenoate + H(+). It catalyses the reaction 1-(9Z-octadecenoyl)-sn-glycero-3-phospho-(1D-myo-inositol) + H2O = sn-glycero-3-phospho-1D-myo-inositol + (9Z)-octadecenoate + H(+). The enzyme catalyses 1-(9Z-octadecenoyl)-sn-glycero-3-phosphoethanolamine + H2O = sn-glycero-3-phosphoethanolamine + (9Z)-octadecenoate + H(+). The catalysed reaction is 1-(9Z-octadecenoyl)-sn-glycero-3-phosphocholine + H2O = 1-(9Z-octadecenoyl)-sn-glycerol + phosphocholine + H(+). It carries out the reaction 2-(9Z-octadecenoyl)-glycerol + H2O = glycerol + (9Z)-octadecenoate + H(+). It catalyses the reaction 1-hexadecanoyl-sn-glycero-3-phospho-L-serine + H2O = sn-glycero-3-phospho-L-serine + hexadecanoate + H(+). The enzyme catalyses 2-(5Z,8Z,11Z,14Z-eicosatetraenoyl)-glycerol + H2O = glycerol + (5Z,8Z,11Z,14Z)-eicosatetraenoate + H(+). The catalysed reaction is Hydrolyzes glycerol monoesters of long-chain fatty acids.. It carries out the reaction 1-decanoylglycerol + H2O = decanoate + glycerol + H(+). It catalyses the reaction 1-dodecanoylglycerol + H2O = dodecanoate + glycerol + H(+). The enzyme catalyses 1-tetradecanoylglycerol + H2O = tetradecanoate + glycerol + H(+). The catalysed reaction is 2-hexadecanoylglycerol + H2O = glycerol + hexadecanoate + H(+). It carries out the reaction 1-(9Z-octadecenoyl)-glycerol + H2O = glycerol + (9Z)-octadecenoate + H(+). It catalyses the reaction 2-(9Z,12Z-octadecadienoyl)-glycerol + H2O = (9Z,12Z)-octadecadienoate + glycerol + H(+). The enzyme catalyses 1-(5Z,8Z,11Z,14Z-eicosatetraenoyl)-glycerol + H2O = glycerol + (5Z,8Z,11Z,14Z)-eicosatetraenoate + H(+). The catalysed reaction is 1-(9Z,12Z-octadecadienoyl)-glycerol + H2O = (9Z,12Z)-octadecadienoate + glycerol + H(+). It carries out the reaction 1-hexadecanoylglycerol + H2O = glycerol + hexadecanoate + H(+). It catalyses the reaction 1-octadecanoylglycerol + H2O = octadecanoate + glycerol + H(+). The enzyme catalyses 1-octadecanoyl-2-(9,10-epoxyoctadecanoyl)-sn-glycero-3-phospho-L-serine + H2O = 9,10-epoxyoctadecanoate + 1-octadecanoyl-sn-glycero-3-phosphoserine + H(+). The catalysed reaction is 1-octadecanoyl-2-(10-hydroxyoctadecanoyl)-sn-glycero-3-phospho-L-serine + H2O = 1-octadecanoyl-sn-glycero-3-phosphoserine + 10-hydroxyoctadecanoate + H(+). It carries out the reaction 1-hexadecanoyl-2-(10-hydroxyoctadecanoyl)-sn-glycero-3-phospho-L-serine + H2O = 10-hydroxyoctadecanoate + 1-hexadecanoyl-sn-glycero-3-phospho-L-serine + H(+). In terms of biological role, lysophosphatidylserine (LPS) lipase that mediates the hydrolysis of lysophosphatidylserine, a class of signaling lipids that regulates immunological and neurological processes. Represents a major lysophosphatidylserine lipase in the brain, thereby playing a key role in the central nervous system. Also able to hydrolyze oxidized phosphatidylserine; oxidized phosphatidylserine is produced in response to severe inflammatory stress and constitutes a proapoptotic 'eat me' signal. Also has monoacylglycerol (MAG) lipase activity: hydrolyzes 2-arachidonoylglycerol (2-AG), thereby acting as a regulator of endocannabinoid signaling pathways. Has a strong preference for very-long-chain lipid substrates; substrate specificity is likely due to improved catalysis and not improved substrate binding. The polypeptide is Lysophosphatidylserine lipase ABHD12 (Danio rerio (Zebrafish)).